Consider the following 98-residue polypeptide: Protein translation factor SUI1 homolog (98 aa).

It belongs to the SUI1 family.

The sequence is that of Protein translation factor SUI1 homolog from Thermococcus kodakarensis (strain ATCC BAA-918 / JCM 12380 / KOD1) (Pyrococcus kodakaraensis (strain KOD1)).